Here is a 257-residue protein sequence, read N- to C-terminus: UPF0246 protein LPC_0782 (257 aa).

This sequence belongs to the UPF0246 family.

The polypeptide is UPF0246 protein LPC_0782 (Legionella pneumophila (strain Corby)).